Here is a 179-residue protein sequence, read N- to C-terminus: Avenin-like a2 (179 aa).

The signal sequence occupies residues 1 to 19 (MKTMFLLALLAFTATSAVA).

Belongs to the prolamin family. Contains 7 disulfide bonds.

Functionally, seed storage protein. Not integrated in the gluten polymer through disulfide bonds, unless incorporated by reduction and reoxidation during dough making. Increases dough strength and bread volume, but decreases dough stability when added into a base wheat flour. The chain is Avenin-like a2 from Triticum aestivum (Wheat).